The following is a 406-amino-acid chain: uncharacterized protein (406 aa).

The N-myristoyl glycine; by host moiety is linked to residue Gly2. The tract at residues 291-406 (QLESTTEVKP…FQYNKPTYDI (116 aa)) is disordered. A compositionally biased stretch (basic and acidic residues) spans 296–310 (TEVKPESTTEVKPES). Over residues 311 to 323 (TSEVQPESTTEFQ) the composition is skewed to polar residues. Low complexity-rich tracts occupy residues 324 to 333 (PESTTVVEPE), 341 to 351 (ESTTEFQPEST), and 359 to 369 (TTEPQVESTTE). Over residues 370 to 406 (FQPESSTEPQVESTVEVQAESMNESSYFQYNKPTYDI) the composition is skewed to polar residues.

This is an uncharacterized protein from Acanthamoeba polyphaga (Amoeba).